The following is a 125-amino-acid chain: uncharacterized protein (125 aa).

This is an uncharacterized protein from Microplitis demolitor (Parasitoid wasp).